Here is a 152-residue protein sequence, read N- to C-terminus: Protein SprT-like (152 aa).

The 141-residue stretch at 7–147 (QRLVEEVSLQ…CGKCKGKLKP (141 aa)) folds into the SprT-like domain. Histidine 67 is a binding site for Zn(2+). Residue glutamate 68 is part of the active site. Position 71 (histidine 71) interacts with Zn(2+).

The protein belongs to the SprT family. Zn(2+) is required as a cofactor.

The protein localises to the cytoplasm. This is Protein SprT-like from Bacillus cereus (strain B4264).